A 308-amino-acid chain; its full sequence is D-2-hydroxyacid dehydrogenase (308 aa).

NAD(+) is bound by residues threonine 145–leucine 146, valine 224–arginine 226, and aspartate 250. Residue arginine 226 is part of the active site. Residue glutamate 255 is part of the active site. Histidine 274 (proton donor) is an active-site residue. Residue histidine 274–alanine 277 coordinates NAD(+).

This sequence belongs to the D-isomer specific 2-hydroxyacid dehydrogenase family. In terms of assembly, homotetramer.

Catalyzes the stereospecific NAD(P)H-dependent reduction of 2-ketocarboxylic acids into the corresponding D-2-hydroxycarboxylic acids. Can use both NADPH or NADH as reductant, displaying a marked preference for NADPH over NADH. Shows a broad substrate specificity, although it displays a marked preference for the 2-ketocarboxylic acids having an unbranched chain of 4-5 carbon atoms. This is D-2-hydroxyacid dehydrogenase (ddh) from Haloferax mediterranei (strain ATCC 33500 / DSM 1411 / JCM 8866 / NBRC 14739 / NCIMB 2177 / R-4) (Halobacterium mediterranei).